Consider the following 255-residue polypeptide: Glutamate racemase (255 aa).

Substrate-binding positions include 7–8 and 39–40; these read DS and YG. Cys70 acts as the Proton donor/acceptor in catalysis. 71 to 72 lines the substrate pocket; it reads NT. Catalysis depends on Cys181, which acts as the Proton donor/acceptor. 182–183 provides a ligand contact to substrate; it reads TH.

It belongs to the aspartate/glutamate racemases family. Homodimer.

It carries out the reaction L-glutamate = D-glutamate. Its pathway is cell wall biogenesis; peptidoglycan biosynthesis. Its function is as follows. Provides the (R)-glutamate required for cell wall biosynthesis. This chain is Glutamate racemase, found in Helicobacter pylori (strain J99 / ATCC 700824) (Campylobacter pylori J99).